Reading from the N-terminus, the 119-residue chain is BLOC-1-related complex subunit 8 (119 aa).

Phosphoserine is present on serine 109.

It belongs to the BORCS8 family. As to quaternary structure, component of the BLOC-one-related complex (BORC) which is composed of BLOC1S1, BLOC1S2, BORCS5, BORCS6, BORCS7, BORCS8, KXD1 and SNAPIN.

Its subcellular location is the lysosome membrane. In terms of biological role, as part of the BLOC-one-related complex (BORC), it plays a role in the movement and localization of lysosomes at the cell periphery. Associated with the cytosolic face of lysosomes, BORC recruits ARL8B to the lysosomal membrane and couples lysosomes to microtubule plus-end-directed kinesin motors, driving lysosome movement toward the cell periphery. The sequence is that of BLOC-1-related complex subunit 8 from Homo sapiens (Human).